We begin with the raw amino-acid sequence, 215 residues long: Variable small protein 2 (215 aa).

The N-terminal stretch at 1-18 is a signal peptide; sequence MRKRISAIIMTLFMVFMS. Cys19 carries N-palmitoyl cysteine lipidation. A lipid anchor (S-diacylglycerol cysteine) is attached at Cys19.

The protein belongs to the variable small protein (Vsp) family.

It localises to the cell outer membrane. In terms of biological role, the Vlp and Vsp proteins are antigenically distinct proteins, only one vlp or vsp gene is transcriptionally active at any one time. Switching between these genes is a mechanism of host immune response evasion. The chain is Variable small protein 2 from Borrelia hermsii.